Consider the following 72-residue polypeptide: Putative snRNP Sm-like protein (72 aa).

A Sm domain is found at Arg4–Pro72.

It belongs to the snRNP Sm proteins family.

The polypeptide is Putative snRNP Sm-like protein (Methanosarcina barkeri (strain Fusaro / DSM 804)).